Reading from the N-terminus, the 466-residue chain is Argininosuccinate lyase (466 aa).

Belongs to the lyase 1 family. Argininosuccinate lyase subfamily.

The protein resides in the cytoplasm. The catalysed reaction is 2-(N(omega)-L-arginino)succinate = fumarate + L-arginine. It functions in the pathway amino-acid biosynthesis; L-arginine biosynthesis; L-arginine from L-ornithine and carbamoyl phosphate: step 3/3. This is Argininosuccinate lyase from Methylocella silvestris (strain DSM 15510 / CIP 108128 / LMG 27833 / NCIMB 13906 / BL2).